A 427-amino-acid polypeptide reads, in one-letter code: UDP-N-acetyl-D-mannosamine dehydrogenase (427 aa).

Positions 19, 20, 39, 44, 91, and 130 each coordinate NAD(+). Positions 155, 156, 207, 211, 214, 245, 247, and 258 each coordinate UDP-N-acetyl-alpha-D-mannosaminouronate. Lysine 207 functions as the Proton donor/acceptor in the catalytic mechanism. Cysteine 261 (nucleophile) is an active-site residue. UDP-N-acetyl-alpha-D-mannosaminouronate-binding residues include tyrosine 318 and lysine 319. Arginine 326 is an NAD(+) binding site. Lysine 404 contributes to the UDP-N-acetyl-alpha-D-mannosaminouronate binding site.

It belongs to the UDP-glucose/GDP-mannose dehydrogenase family. In terms of assembly, homotetramer; probably dimer of dimers.

It carries out the reaction UDP-N-acetyl-alpha-D-mannosamine + 2 NAD(+) + H2O = UDP-N-acetyl-alpha-D-mannosaminouronate + 2 NADH + 3 H(+). Catalyzes the four-electron oxidation of UDP-N-acetyl-D-mannosamine (UDP-ManNAc), reducing NAD(+) and releasing UDP-N-acetylmannosaminuronic acid (UDP-ManNAcA). This is UDP-N-acetyl-D-mannosamine dehydrogenase (wecC) from Methanococcus vannielii (strain ATCC 35089 / DSM 1224 / JCM 13029 / OCM 148 / SB).